Reading from the N-terminus, the 101-residue chain is Chaperone modulatory protein CbpM (101 aa).

It belongs to the CbpM family.

In terms of biological role, interacts with CbpA and inhibits both the DnaJ-like co-chaperone activity and the DNA binding activity of CbpA. Together with CbpA, modulates the activity of the DnaK chaperone system. Does not inhibit the co-chaperone activity of DnaJ. The chain is Chaperone modulatory protein CbpM from Salmonella arizonae (strain ATCC BAA-731 / CDC346-86 / RSK2980).